We begin with the raw amino-acid sequence, 71 residues long: DNA-directed RNA polymerase subunit omega (71 aa).

It belongs to the RNA polymerase subunit omega family. As to quaternary structure, the RNAP catalytic core consists of 2 alpha, 1 beta, 1 beta' and 1 omega subunit. When a sigma factor is associated with the core the holoenzyme is formed, which can initiate transcription.

It carries out the reaction RNA(n) + a ribonucleoside 5'-triphosphate = RNA(n+1) + diphosphate. Its function is as follows. Promotes RNA polymerase assembly. Latches the N- and C-terminal regions of the beta' subunit thereby facilitating its interaction with the beta and alpha subunits. The protein is DNA-directed RNA polymerase subunit omega of Alkaliphilus oremlandii (strain OhILAs) (Clostridium oremlandii (strain OhILAs)).